The primary structure comprises 145 residues: D-aminoacyl-tRNA deacylase (145 aa).

A Gly-cisPro motif, important for rejection of L-amino acids motif is present at residues 137 to 138; that stretch reads GP.

Belongs to the DTD family. In terms of assembly, homodimer.

It localises to the cytoplasm. The catalysed reaction is glycyl-tRNA(Ala) + H2O = tRNA(Ala) + glycine + H(+). The enzyme catalyses a D-aminoacyl-tRNA + H2O = a tRNA + a D-alpha-amino acid + H(+). In terms of biological role, an aminoacyl-tRNA editing enzyme that deacylates mischarged D-aminoacyl-tRNAs. Also deacylates mischarged glycyl-tRNA(Ala), protecting cells against glycine mischarging by AlaRS. Acts via tRNA-based rather than protein-based catalysis; rejects L-amino acids rather than detecting D-amino acids in the active site. By recycling D-aminoacyl-tRNA to D-amino acids and free tRNA molecules, this enzyme counteracts the toxicity associated with the formation of D-aminoacyl-tRNA entities in vivo and helps enforce protein L-homochirality. The polypeptide is D-aminoacyl-tRNA deacylase (Escherichia coli O139:H28 (strain E24377A / ETEC)).